A 576-amino-acid chain; its full sequence is uncharacterized protein (576 aa).

A compositionally biased stretch (polar residues) spans 241-261; the sequence is DNTKAPSPTNTAGSRELSTPA. The interval 241–270 is disordered; sequence DNTKAPSPTNTAGSRELSTPAGSPGKASLP.

This is an uncharacterized protein from Bacillus subtilis (strain 168).